A 105-amino-acid chain; its full sequence is Multidrug resistance protein EbrA (105 aa).

The next 4 helical transmembrane spans lie at 2 to 22 (LIGY…AAML), 35 to 55 (ALVV…LNHI), 57 to 77 (LSLS…VIGV), and 84 to 104 (LNAK…LLNW).

Belongs to the drug/metabolite transporter (DMT) superfamily. Small multidrug resistance (SMR) (TC 2.A.7.1) family. EbrA/EbrB subfamily. As to quaternary structure, the efflux pump is composed of EbrA and EbrB.

The protein resides in the cell membrane. Functionally, part of a multidrug efflux pump. Confers resistance to cationic lipophilic dyes such as ethidium bromide, acriflavine, pyronine Y and safranin O. The efflux is probably coupled to an influx of protons. The protein is Multidrug resistance protein EbrA (ebrA) of Bacillus subtilis (strain 168).